We begin with the raw amino-acid sequence, 87 residues long: Xibalbin-2 (87 aa).

Positions 1-25 (MKGVCTRKVLYFFMAVILFVAIVAS) are cleaved as a signal peptide. Residues 26-45 (EDTENRNPAMAMPLQRMEQE) constitute a propeptide that is removed on maturation.

Belongs to the xibalbin-2 family. Post-translationally, contains 5 disulfide bonds. Expressed by the venom gland. Not found in the whole body.

The protein resides in the secreted. Functionally, probable neurotoxin. Moderately inhibits voltage-gated potassium channels (Kv1.1/KCNA1, Kv1.2/KCNA2, Kv1.3/KCNA3, and Kv1.6/KCNA6, with the highest toxicity against Kv1.6 (73.2% inhibition at 1 uM)) and weakly inhibits sodium channels (Nav1.4/SCN4A). Does not activate protein kinase A type II (PKA-II) and MAP kinase Erk1/2 in sensory neurons. Does not show cytotoxic activity. Does not have an impact on Ca2+, cAMP, and NO signaling in the cell types analyzed. Does not interfere with the adhesion of leukocytes to endothelial cells. In terms of biological role, moderately inhibits voltage-gated potassium channels (Kv1.1/KCNA1, Kv1.2/KCNA2, Kv1.3/KCNA3, and Kv1.6/KCNA6, with the highest toxicity against Kv1.6 (75.9% inhibition at 1 uM)). Does not activate protein kinase A type II (PKA-II) and MAP kinase Erk1/2 in sensory neurons. Does not show cytotoxic activity. Does not have an impact on Ca2+, cAMP, and NO signaling in the cell types analyzed. Does not interfere with the adhesion of leukocytes to endothelial cells. This Xibalbanus tulumensis (Blind cave remipede) protein is Xibalbin-2.